The chain runs to 68 residues: UPF0434 protein BURPS668_0926 (68 aa).

The protein belongs to the UPF0434 family.

This Burkholderia pseudomallei (strain 668) protein is UPF0434 protein BURPS668_0926.